We begin with the raw amino-acid sequence, 198 residues long: GTP-binding protein Di-Ras1 (198 aa).

GTP-binding positions include 17 to 22 (GVGKSS), 33 to 39 (RDTYIPT), 61 to 65 (DTTGS), 121 to 125 (NKCDE), alanine 151, and 151 to 152 (AK). The Effector region signature appears at 36–44 (YIPTIEDTY). Position 195 is a cysteine methyl ester (cysteine 195). Cysteine 195 carries S-geranylgeranyl cysteine lipidation. A propeptide spans 196-198 (ALM) (removed in mature form).

It belongs to the small GTPase superfamily. Di-Ras family.

It localises to the cell membrane. Displays low GTPase activity and exists predominantly in the GTP-bound form. In Mus musculus (Mouse), this protein is GTP-binding protein Di-Ras1 (Diras1).